We begin with the raw amino-acid sequence, 56 residues long: Arcadin-3 (56 aa).

Its subcellular location is the cytoplasm. The protein resides in the cytoskeleton. Its function is as follows. Part of an actin-like archaeal cytoskeleton. This chain is Arcadin-3, found in Pyrobaculum calidifontis (strain DSM 21063 / JCM 11548 / VA1).